A 189-amino-acid polypeptide reads, in one-letter code: NADH dehydrogenase [ubiquinone] 1 beta subcomplex subunit 5, mitochondrial (189 aa).

The N-terminal 46 residues, 1-46 (MAGMSLLRRVSVTAVAALSGRSLGTRLGFGGFLTRGFPKAVAPVRH), are a transit peptide targeting the mitochondrion. The chain crosses the membrane as a helical span at residues 73-93 (FYIALTGIPVVIIITLVNVFI).

It belongs to the complex I NDUFB5 subunit family. As to quaternary structure, complex I is composed of 45 different subunits.

It localises to the mitochondrion inner membrane. Accessory subunit of the mitochondrial membrane respiratory chain NADH dehydrogenase (Complex I), that is believed not to be involved in catalysis. Complex I functions in the transfer of electrons from NADH to the respiratory chain. The immediate electron acceptor for the enzyme is believed to be ubiquinone. This Macaca fascicularis (Crab-eating macaque) protein is NADH dehydrogenase [ubiquinone] 1 beta subcomplex subunit 5, mitochondrial (NDUFB5).